A 438-amino-acid polypeptide reads, in one-letter code: Mannose-1-phosphate guanylyltransferase regulatory subunit alpha (438 aa).

The substrate-binding domain stretch occupies residues 2–260 (LKAVILIGGP…PNWWSQLKTA (259 aa)). 2 residues coordinate GDP-alpha-D-mannose: Glu87 and Gln256. A hexapeptide repeat domain region spans residues 282-438 (LANVGIKRGE…SRSFKNEIIL (157 aa)). The tract at residues 373–402 (TPSDPDPNKPFAKMENPPLFNNEGKLNPSI) is C-loop.

Belongs to the transferase hexapeptide repeat family. As to quaternary structure, component of the GMPPA-GMPPB mannose-1-phosphate guanylyltransferase complex composed of 4 GMPPA subunits and 8 GMPPB subunits; the complex is organized into three layers, a central layer made up of 2 GMPPA dimers sandwiched between two layers each made up of 2 GMPPB dimers.

Regulatory subunit of the GMPPA-GMPPB mannose-1-phosphate guanylyltransferase complex; reduces the catalytic activity of GMPPB when part of the complex. Mediates allosteric feedback inhibition of GMPPB catalytic activity upon binding GDP-alpha-D-mannose. Together with GMPPB regulates GDP-alpha-D-mannose levels. In Drosophila melanogaster (Fruit fly), this protein is Mannose-1-phosphate guanylyltransferase regulatory subunit alpha.